The primary structure comprises 60 residues: Mastoparan-VB1 (60 aa).

Positions 1 to 23 (MKNTILLLFTAFIFLSGFFGMSA) are cleaved as a signal peptide. Positions 24-45 (EALADPKADPLAGPFPDADPDP) are excised as a propeptide. 4 AXPX repeats span residues 27–30 (ADPK), 31–34 (ADPL), 35–38 (AGPF), and 40–43 (DADP). Position 59 is a leucine amide (Leu-59).

Expressed by the venom gland.

Its subcellular location is the secreted. It is found in the target cell membrane. Functionally, antimicrobial peptide. Shows activity against both Gram-positive (S.aureus MIC=1.9-3.75 ug/ml) and -negative (E.coli MIC=15-60 ug/ml) bacteria, as well against fungi (C.albicans MIC=15 ug/ml). Also promotes moderate mast cell degranulation. Does not show hemolytic activity on rabbit and human erythrocytes. Its mast cell degranulation activity may be related to the activation of G-protein coupled receptors in mast cells as well as interaction with other proteins located in cell endosomal membranes in the mast cells. The polypeptide is Mastoparan-VB1 (Vespa bicolor (Black shield wasp)).